An 8799-amino-acid polypeptide reads, in one-letter code: Nesprin-1 (8799 aa).

The segment at M1–G289 is actin-binding. Residues M1 to R8748 are Cytoplasmic-facing. Calponin-homology (CH) domains follow at residues I27–Q134 and G178–P283. 52 Spectrin repeats span residues R314–F397, D398–K502, M503–E609, E610–A703, D704–V815, P816–E923, A924–I1024, A1025–D1122, P1123–E1246, G1247–I1333, Q1334–V1442, K1443–H1548, L1549–L1651, L1652–V1761, L1762–C1877, M1878–L1974, V1975–C2079, C2080–S2193, L2194–T2301, A2302–A2399, R2400–C2511, V2512–C2617, Q2618–V2729, I2730–L2836, V2837–V2960, T2961–E3060, Q3061–L3169, K3170–L3273, D3274–A3385, L3386–L3488, V3489–L3591, N3592–W3718, Y3719–G3812, L3813–K3918, V3919–Y4026, R4027–K4137, A4138–D4233, L4234–S4337, V4338–A4449, L4450–S4558, L4559–A4667, I4668–T4774, T4775–R4880, M4881–I4989, Y4990–C5097, M5098–A5207, V5208–V5316, K5317–K5422, A5423–L5520, N5521–A5628, A5629–A5745, and V5746–H5851. A coiled-coil region spans residues R314–S8666. At K377 the chain carries Phosphoserine. Position 732 is a phosphoserine (S732). The interval K1288–E1310 is disordered. T2268 is modified (phosphothreonine). Phosphoserine is present on S5655. A disordered region spans residues P5868–V5894. 19 Spectrin repeats span residues L5971 to K6080, L6081 to E6187, R6377 to Q6488, I6489 to L6584, H6585 to W6694, S6695 to K6798, H6799 to L6905, H6906 to L7023, L7024 to A7131, L7132 to L7240, L7241 to G7353, V7354 to F7457, L7458 to I7561, D7562 to L7674, L7675 to A7786, V7787 to T7886, L7887 to T8000, W8001 to F8109, and I8110 to P8221. Residues D8225 and S8227 each carry the phosphoserine modification. A disordered region spans residues T8237–L8287. The segment covering P8257 to L8269 has biased composition (low complexity). The residue at position 8278 (T8278) is a Phosphothreonine. Phosphoserine is present on residues S8281, S8284, and S8308. Spectrin repeat units follow at residues S8332 to N8440, L8441 to A8550, and L8551 to Q8668. T8363 bears the Phosphothreonine mark. The segment at S8673–P8735 is disordered. Polar residues-rich tracts occupy residues T8682–Q8698 and S8706–K8718. Over residues S8721–P8735 the composition is skewed to basic and acidic residues. Positions R8740 to L8799 constitute a KASH domain. The helical; Anchor for type IV membrane protein transmembrane segment at A8749–M8769 threads the bilayer. The Perinuclear space segment spans residues S8770–L8799.

This sequence belongs to the nesprin family. Core component of LINC complexes which are composed of inner nuclear membrane SUN domain-containing proteins coupled to outer nuclear membrane KASH domain-containing nesprins. SUN and KASH domain-containing proteins seem to bind each other promiscuously; however, differentially expression of LINC complex constituents can give rise to specific assemblies. At least SUN1/2-containing core LINC complexes are proposed to be hexameric composed of three protomers of each KASH and SUN domain-containing protein. The SUN2:SYNE1/KASH1 LINC complex is a heterohexamer; the homotrimeric cloverleave-like conformation of the SUN domain is a prerequisite for LINC complex formation in which three separate SYNE1/KASH1 peptides bind at the interface of adjacent SUN domains. Self-associates. Interacts with SYNE3. Interacts with SUN3; proposed to form a spermatogenesis-specific LINC complex with SUN3 during sperm head formation. May interact with MUSK. Interacts with SPAG4/SUN4. Interacts with EMD and LMNA in vitro. Interacts with F-actin via its N-terminal domain. Interacts with DCTN1 and DYNC1I1/2; suggesting the association with the dynein-dynactin motor complex. Interacts (via KASH domain) with TMEM258. The disulfid bond with SUN1 or SUN2 is required for stability of the respective LINC complex under tensile forces. Expressed in C2F3 and CH310T1/2 cells, brain and skeletal muscle (at protein level).

Its subcellular location is the nucleus outer membrane. The protein localises to the nucleus. The protein resides in the nucleus envelope. It localises to the cytoplasm. It is found in the cytoskeleton. Its subcellular location is the myofibril. The protein localises to the sarcomere. In terms of biological role, multi-isomeric modular protein which forms a linking network between organelles and the actin cytoskeleton to maintain the subcellular spatial organization. As a component of the LINC (LInker of Nucleoskeleton and Cytoskeleton) complex involved in the connection between the nuclear lamina and the cytoskeleton. The nucleocytoplasmic interactions established by the LINC complex play an important role in the transmission of mechanical forces across the nuclear envelope and in nuclear movement and positioning. May be involved in nucleus-centrosome attachment. During interkinetic nuclear migration (INM) at G2 phase and nuclear migration in neural progenitors its LINC complex association with SUN1/2 and probably association with cytoplasmic dynein-dynactin motor complexes functions to pull the nucleus toward the centrosome; SYNE1 and SYNE2 seem to act redundantly in cerebellum, midbrain, brain stem, and other brain regions except cerebral cortex and hippocampus. Required for centrosome migration to the apical cell surface during early ciliogenesis. May be involved in nuclear remodeling during sperm head formation in spermatogenesis; a probable SUN3:SYNE1/KASH1 LINC complex may tether spermatid nuclei to posterior cytoskeletal structures such as the manchette. The polypeptide is Nesprin-1 (Mus musculus (Mouse)).